The primary structure comprises 196 residues: Anthranilate synthase component 2 (196 aa).

The 194-residue stretch at 3-196 (NIVFIDNFDS…IEWALEKNNA (194 aa)) folds into the Glutamine amidotransferase type-1 domain. 57 to 59 (GPG) serves as a coordination point for L-glutamine. Residue Cys-84 is the Nucleophile; for GATase activity of the active site. Residues Gln-88 and 134–135 (SL) contribute to the L-glutamine site. Catalysis depends on for GATase activity residues His-170 and Glu-172.

As to quaternary structure, heterotetramer consisting of two non-identical subunits: a beta subunit (TrpG) and a large alpha subunit (TrpE).

It carries out the reaction chorismate + L-glutamine = anthranilate + pyruvate + L-glutamate + H(+). It functions in the pathway amino-acid biosynthesis; L-tryptophan biosynthesis; L-tryptophan from chorismate: step 1/5. In terms of biological role, part of a heterotetrameric complex that catalyzes the two-step biosynthesis of anthranilate, an intermediate in the biosynthesis of L-tryptophan. In the first step, the glutamine-binding beta subunit (TrpG) of anthranilate synthase (AS) provides the glutamine amidotransferase activity which generates ammonia as a substrate that, along with chorismate, is used in the second step, catalyzed by the large alpha subunit of AS (TrpE) to produce anthranilate. In the absence of TrpG, TrpE can synthesize anthranilate directly from chorismate and high concentrations of ammonia. This Vibrio parahaemolyticus serotype O3:K6 (strain RIMD 2210633) protein is Anthranilate synthase component 2 (trpG).